A 321-amino-acid chain; its full sequence is CRISPR system ring nuclease SSO1393 (321 aa).

It belongs to the cOA ring nuclease family. Homodimer. The cofactor is Does not require a metal cofactor..

The protein resides in the cytoplasm. It catalyses the reaction cyclic tetraadenylate = 2 5'-hydroxy-diadenylate 2',3'-cylic phosphate. Its function is as follows. CRISPR (clustered regularly interspaced short palindromic repeat) is an adaptive immune system that provides protection against mobile genetic elements (viruses, transposable elements and conjugative plasmids). CRISPR clusters contain spacers, sequences complementary to antecedent mobile elements, and target invading nucleic acids. CRISPR clusters are transcribed and processed into CRISPR RNA (crRNA). A nuclease that degrades cyclic oligoadenylates (cOA), second messengers that induce an antiviral state important for defense against invading nucleic acids. Destruction of cOA deactivates the Csx1 ribonuclease, preventing uncontrolled degradation of cellular RNA. Slowly degrades cA4 (a tetraadenylate ring) into first a linear tetraadenylate product and secondly into a linear diadenylate product with 5'-OH and 2',3'-cyclic phosphate termini. Is 10-fold less active than SSO2081, suggesting it plays a minor role in cA4 degradation. There may be 2 active sites per homodimer. The protein is CRISPR system ring nuclease SSO1393 of Saccharolobus solfataricus (strain ATCC 35092 / DSM 1617 / JCM 11322 / P2) (Sulfolobus solfataricus).